Here is a 115-residue protein sequence, read N- to C-terminus: T cell receptor beta variable 7-6 (115 aa).

Residues 1–21 (MGTSLLCWVVLGFLGTDHTGA) form the signal peptide. Residues 22–115 (GVSQSPRYKV…SAMYRCASSL (94 aa)) form the Ig-like domain. Residues Cys-42 and Cys-111 are joined by a disulfide bond.

Alpha-beta TR is a heterodimer composed of an alpha and beta chain; disulfide-linked. The alpha-beta TR is associated with the transmembrane signaling CD3 coreceptor proteins to form the TR-CD3 (TcR or TCR). The assembly of alpha-beta TR heterodimers with CD3 occurs in the endoplasmic reticulum where a single alpha-beta TR heterodimer associates with one CD3D-CD3E heterodimer, one CD3G-CD3E heterodimer and one CD247 homodimer forming a stable octameric structure. CD3D-CD3E and CD3G-CD3E heterodimers preferentially associate with TR alpha and TR beta chains, respectively. The association of the CD247 homodimer is the last step of TcR assembly in the endoplasmic reticulum and is required for transport to the cell surface.

Its subcellular location is the cell membrane. Its function is as follows. V region of the variable domain of T cell receptor (TR) beta chain that participates in the antigen recognition. Alpha-beta T cell receptors are antigen specific receptors which are essential to the immune response and are present on the cell surface of T lymphocytes. Recognize peptide-major histocompatibility (MH) (pMH) complexes that are displayed by antigen presenting cells (APC), a prerequisite for efficient T cell adaptive immunity against pathogens. Binding of alpha-beta TR to pMH complex initiates TR-CD3 clustering on the cell surface and intracellular activation of LCK that phosphorylates the ITAM motifs of CD3G, CD3D, CD3E and CD247 enabling the recruitment of ZAP70. In turn ZAP70 phosphorylates LAT, which recruits numerous signaling molecules to form the LAT signalosome. The LAT signalosome propagates signal branching to three major signaling pathways, the calcium, the mitogen-activated protein kinase (MAPK) kinase and the nuclear factor NF-kappa-B (NF-kB) pathways, leading to the mobilization of transcription factors that are critical for gene expression and essential for T cell growth and differentiation. The T cell repertoire is generated in the thymus, by V-(D)-J rearrangement. This repertoire is then shaped by intrathymic selection events to generate a peripheral T cell pool of self-MH restricted, non-autoaggressive T cells. Post-thymic interaction of alpha-beta TR with the pMH complexes shapes TR structural and functional avidity. This is T cell receptor beta variable 7-6 from Homo sapiens (Human).